A 190-amino-acid polypeptide reads, in one-letter code: MASRPISFVTGNAKKLEEVRAILGAAFPREIVAVKLDLPELQGEVDDICRKKCLEAARNVKGPVLVEDTCLCFNALKGLPGPYIKWFLEKLGPEGLHKLLDGWEDKSAQAVCTFAYAPDEQGEVLLFQGRTEGDIVFPRGSRDFGWDPIFQPKGYDKTYAELPKERKNEISHRFRALDKLREYFGGEGGK.

ITP is bound at residue 10 to 15; it reads TGNAKK. Position 40 (Glu40) interacts with Mg(2+). ITP contacts are provided by residues Lys52, 68 to 69, Lys85, 144 to 147, Lys167, and 172 to 173; these read DT, FGWD, and HR.

Belongs to the HAM1 NTPase family. As to quaternary structure, homodimer. Mg(2+) is required as a cofactor. Requires Mn(2+) as cofactor.

The protein localises to the cytoplasm. The enzyme catalyses ITP + H2O = IMP + diphosphate + H(+). It catalyses the reaction dITP + H2O = dIMP + diphosphate + H(+). The catalysed reaction is XTP + H2O = XMP + diphosphate + H(+). Functionally, pyrophosphatase that hydrolyzes non-canonical purine nucleotides such as inosine triphosphate (ITP), deoxyinosine triphosphate (dITP) or xanthosine 5'-triphosphate (XTP) to their respective monophosphate derivatives. The enzyme does not distinguish between the deoxy- and ribose forms. Probably excludes non-canonical purines from RNA and DNA precursor pools, thus preventing their incorporation into RNA and DNA and avoiding chromosomal lesions. This Culex quinquefasciatus (Southern house mosquito) protein is Inosine triphosphate pyrophosphatase.